Here is a 59-residue protein sequence, read N- to C-terminus: uncharacterized protein (59 aa).

The helical transmembrane segment at 7 to 27 (LLLLVAIALISAFALTVTGVV) threads the bilayer.

The protein resides in the membrane. This is an uncharacterized protein from Pyrobaculum aerophilum (strain ATCC 51768 / DSM 7523 / JCM 9630 / CIP 104966 / NBRC 100827 / IM2).